We begin with the raw amino-acid sequence, 440 residues long: MVPLKLQALFCLLCCLPWVHPFHWQDTSSFDFRPSVMFHKLQSVMSAAGSGHSKIPKGNGSYPVGCTDLMFGYGNESVFVRLYYPAQDQGRLDTVWIPNKEYFLGLSIFLGTPSIVGNILHLLYGSLTTPASWNSPLRTGEKYPLIVFSHGLGAFRTIYSAIGIGLASNGFIVATVEHRDRSASATYFFEDQVAAKVENRSWLYLRKVKQEESESVRKEQVQQRAIECSRALSAILDIEHGDPKENVLGSAFDMKQLKDAIDETKIALMGHSFGGATVLQALSEDQRFRCGVALDPWMYPVNEELYSRTLQPLLFINSAKFQTPKDIAKMKKFYQPDKERKMITIKGSVHQNFDDFTFVTGKIIGNKLTLKGEIDSRVAIDLTNKASMAFLQKHLGLQKDFDQWDPLVEGDDENLIPGSPFDAVTQVPAQQHSPGSQTQN.

The first 21 residues, 1–21 (MVPLKLQALFCLLCCLPWVHP), serve as a signal peptide directing secretion. 3 N-linked (GlcNAc...) asparagine glycosylation sites follow: Asn-59, Asn-75, and Asn-199. Residue Ser-272 is the Nucleophile of the active site. Catalysis depends on charge relay system residues Asp-295 and His-350.

This sequence belongs to the AB hydrolase superfamily. Lipase family. N-glycosylated. Plasma.

It is found in the secreted. The protein localises to the extracellular space. It catalyses the reaction a 1-O-alkyl-2-acetyl-sn-glycero-3-phosphocholine + H2O = a 1-O-alkyl-sn-glycero-3-phosphocholine + acetate + H(+). The enzyme catalyses 1-O-decyl-2-acetyl-sn-glycero-3-phosphocholine + H2O = 1-O-decyl-sn-glycero-3-phosphocholine + acetate + H(+). It carries out the reaction 1-O-dodecyl-2-acetyl-sn-glycero-3-phosphocholine + H2O = 1-O-dodecyl-sn-glycero-3-phosphocholine + acetate + H(+). The catalysed reaction is 1-O-tetradecyl-2-acetyl-sn-glycero-3-phosphocholine + H2O = 1-O-tetradecyl-sn-glycero-3-phosphocholine + acetate + H(+). It catalyses the reaction 1-O-hexadecyl-2-acetyl-sn-glycero-3-phosphocholine + H2O = 1-O-hexadecyl-sn-glycero-3-phosphocholine + acetate + H(+). The enzyme catalyses 1-O-octadecyl-2-acetyl-sn-glycero-3-phosphocholine + H2O = 1-O-octadecyl-sn-glycero-3-phosphocholine + acetate + H(+). It carries out the reaction 1-hexadecanoyl-2-acetyl-sn-glycero-3-phosphocholine + H2O = 1-hexadecanoyl-sn-glycero-3-phosphocholine + acetate + H(+). The catalysed reaction is 1-hexadecanoyl-2-propionyl-sn-glycero-3-phosphocholine + H2O = propanoate + 1-hexadecanoyl-sn-glycero-3-phosphocholine + H(+). It catalyses the reaction 1-hexadecanoyl-2-butanoyl-sn-glycero-3-phosphocholine + H2O = butanoate + 1-hexadecanoyl-sn-glycero-3-phosphocholine + H(+). The enzyme catalyses 1-hexadecanoyl-2-pentanoyl-sn-glycero-3-phosphocholine + H2O = pentanoate + 1-hexadecanoyl-sn-glycero-3-phosphocholine + H(+). It carries out the reaction 1-hexadecanoyl-2-glutaroyl-sn-glycero-3-phosphocholine + H2O = glutarate + 1-hexadecanoyl-sn-glycero-3-phosphocholine + H(+). The catalysed reaction is 1-hexadecanoyl-2-(5-oxopentanoyl)-sn-glycero-3-phosphocholine + H2O = 5-oxopentanoate + 1-hexadecanoyl-sn-glycero-3-phosphocholine + H(+). It catalyses the reaction 1-hexadecanoyl-2-(9-oxononanoyl)-sn-glycero-3-phosphocholine + H2O = 9-oxononanoate + 1-hexadecanoyl-sn-glycero-3-phosphocholine + H(+). The enzyme catalyses 1-hexadecanoyl-2-[9-hydroperoxy-(10E-octadecenoyl)]-sn-glycero-3-phosphocholine + H2O = 9-hydroperoxy-10E-octadecenoate + 1-hexadecanoyl-sn-glycero-3-phosphocholine + H(+). It carries out the reaction 1-hexadecanoyl-2-(10-hydroperoxy-8E-octadecenoyl)-sn-glycero-3-phosphocholine + H2O = 10-hydroperoxy-(8E)-octadecenoate + 1-hexadecanoyl-sn-glycero-3-phosphocholine + H(+). Lipoprotein-associated calcium-independent phospholipase A2 involved in phospholipid catabolism during inflammatory and oxidative stress response. At the lipid-aqueous interface, hydrolyzes the ester bond of fatty acyl group attached at sn-2 position of phospholipids (phospholipase A2 activity). Specifically targets phospholipids with a short-chain fatty acyl group at sn-2 position. Can hydrolyze phospholipids with long fatty acyl chains, only if they carry oxidized functional groups. Hydrolyzes and inactivates platelet-activating factor (PAF, 1-O-alkyl-2-acetyl-sn-glycero-3-phosphocholine), a potent pro-inflammatory signaling lipid that acts through PTAFR on various innate immune cells. Hydrolyzes oxidatively truncated phospholipids carrying an aldehyde group at omega position, preventing their accumulation in lipoprotein particles and uncontrolled pro-inflammatory effects. As part of high-density lipoprotein (HDL) particles, can hydrolyze phospholipids having long-chain fatty acyl hydroperoxides at sn-2 position and protect against potential accumulation of these oxylipins in the vascular wall. Catalyzes the release from membrane phospholipids of F2-isoprostanes, lipid biomarkers of cellular oxidative damage. This is Platelet-activating factor acetylhydrolase (Pla2g7) from Mus musculus (Mouse).